A 407-amino-acid chain; its full sequence is Imidazolonepropionase (407 aa).

Fe(3+) contacts are provided by His-73 and His-75. Zn(2+)-binding residues include His-73 and His-75. 4-imidazolone-5-propanoate is bound by residues Arg-82, Tyr-145, and His-178. Tyr-145 lines the N-formimidoyl-L-glutamate pocket. Fe(3+) is bound at residue His-243. His-243 lines the Zn(2+) pocket. Position 246 (Gln-246) interacts with 4-imidazolone-5-propanoate. Asp-318 lines the Fe(3+) pocket. A Zn(2+)-binding site is contributed by Asp-318. N-formimidoyl-L-glutamate contacts are provided by Asn-320 and Gly-322. Thr-323 provides a ligand contact to 4-imidazolone-5-propanoate.

Belongs to the metallo-dependent hydrolases superfamily. HutI family. Zn(2+) serves as cofactor. Requires Fe(3+) as cofactor.

It localises to the cytoplasm. It catalyses the reaction 4-imidazolone-5-propanoate + H2O = N-formimidoyl-L-glutamate. Its pathway is amino-acid degradation; L-histidine degradation into L-glutamate; N-formimidoyl-L-glutamate from L-histidine: step 3/3. Catalyzes the hydrolytic cleavage of the carbon-nitrogen bond in imidazolone-5-propanoate to yield N-formimidoyl-L-glutamate. It is the third step in the universal histidine degradation pathway. This is Imidazolonepropionase from Serratia proteamaculans (strain 568).